The following is a 454-amino-acid chain: tRNA modification GTPase MnmE (454 aa).

R23, E80, and K120 together coordinate (6S)-5-formyl-5,6,7,8-tetrahydrofolate. A TrmE-type G domain is found at 216-377 (GMKVVIAGRP…LRDHLKQSMG (162 aa)). N226 lines the K(+) pocket. Residues 226–231 (NAGKSS), 245–251 (TDIAGTT), 270–273 (DTAG), 335–338 (NKAD), and 358–360 (SAR) contribute to the GTP site. Residue S230 participates in Mg(2+) binding. Residues T245, I247, and T250 each contribute to the K(+) site. Residue T251 coordinates Mg(2+). A (6S)-5-formyl-5,6,7,8-tetrahydrofolate-binding site is contributed by K454.

The protein belongs to the TRAFAC class TrmE-Era-EngA-EngB-Septin-like GTPase superfamily. TrmE GTPase family. In terms of assembly, homodimer. Heterotetramer of two MnmE and two MnmG subunits. K(+) serves as cofactor.

It is found in the cytoplasm. Functionally, exhibits a very high intrinsic GTPase hydrolysis rate. Involved in the addition of a carboxymethylaminomethyl (cmnm) group at the wobble position (U34) of certain tRNAs, forming tRNA-cmnm(5)s(2)U34. The sequence is that of tRNA modification GTPase MnmE from Yersinia pestis bv. Antiqua (strain Antiqua).